The chain runs to 157 residues: Probable chemoreceptor glutamine deamidase CheD (157 aa).

The protein belongs to the CheD family.

The enzyme catalyses L-glutaminyl-[protein] + H2O = L-glutamyl-[protein] + NH4(+). In terms of biological role, probably deamidates glutamine residues to glutamate on methyl-accepting chemotaxis receptors (MCPs), playing an important role in chemotaxis. The chain is Probable chemoreceptor glutamine deamidase CheD from Archaeoglobus fulgidus (strain ATCC 49558 / DSM 4304 / JCM 9628 / NBRC 100126 / VC-16).